Here is a 110-residue protein sequence, read N- to C-terminus: UPF0122 protein SH1678 (110 aa).

The protein belongs to the UPF0122 family.

Its function is as follows. Might take part in the signal recognition particle (SRP) pathway. This is inferred from the conservation of its genetic proximity to ftsY/ffh. May be a regulatory protein. The chain is UPF0122 protein SH1678 from Staphylococcus haemolyticus (strain JCSC1435).